A 1813-amino-acid chain; its full sequence is MRAPTTARCSGCIQRVRWRGFLPLVLAVLMGTSHAQRDSIGRYEPASRDANRLWHPVGSHPAAAAAKVYSLFREPDAPVPGLSPSEWNQPAQGNPGWLAEAEARRPPRTQQLRRVQPPVQTRRSHPRGQQQIAARAAPSVARLETPQRPAAARRGRLTGRNVCGGQCCPGWTTSNSTNHCIKPVCQPPCQNRGSCSRPQVCICRSGFRGARCEEVIPEEEFDPQNARPVPRRSVERAPGPHRSSEARGSLVTRIQPLVPPPSPPPSRRLSQPWPLQQHSGPSRTVRRYPATGANGQLMSNALPSGLELRDSSPQAAHVNHLSPPWGLNLTEKIKKIKVVFTPTICKQTCARGRCANSCEKGDTTTLYSQGGHGHDPKSGFRIYFCQIPCLNGGRCIGRDECWCPANSTGKFCHLPVPQPDREPAGRGSRHRTLLEGPLKQSTFTLPLSNQLASVNPSLVKVQIHHPPEASVQIHQVARVRGELDPVLEDNSVETRASHRPHGNLGHSPWASNSIPARAGEAPRPPPVLSRHYGLLGQCYLSTVNGQCANPLGSLTSQEDCCGSVGTFWGVTSCAPCPPRQEGPAFPVIENGQLECPQGYKRLNLSHCQDINECLTLGLCKDSECVNTRGSYLCTCRPGLMLDPSRSRCVSDKAVSMQQGLCYRSLGSGTCTLPLVHRITKQICCCSRVGKAWGSTCEQCPLPGTEAFREICPAGHGYTYSSSDIRLSMRKAEEEELASPLREQTEQSTAPPPGQAERQPLRAATATWIEAETLPDKGDSRAVQITTSAPHLPARVPGDATGRPAPSLPGQGIPESPAEEQVIPSSDVLVTHSPPDFDPCFAGASNICGPGTCVSLPNGYRCVCSPGYQLHPSQDYCTDDNECMRNPCEGRGRCVNSVGSYSCLCYPGYTLVTLGDTQECQDIDECEQPGVCSGGRCSNTEGSYHCECDRGYIMVRKGHCQDINECRHPGTCPDGRCVNSPGSYTCLACEEGYVGQSGSCVDVNECLTPGICTHGRCINMEGSFRCSCEPGYEVTPDKKGCRDVDECASRASCPTGLCLNTEGSFTCSACQSGYWVNEDGTACEDLDECAFPGVCPTGVCTNTVGSFSCKDCDQGYRPNPLGNRCEDVDECEGPQSSCRGGECKNTEGSYQCLCHQGFQLVNGTMCEDVNECVGEEHCAPHGECLNSLGSFFCLCAPGFASAEGGTRCQDVDECAATDPCPGGHCVNTEGSFSCLCETASFQPSPDSGECLDIDECEDREDPVCGAWRCENSPGSYRCILDCQPGFYVAPNGDCIDIDECANDTVCGNHGFCDNTDGSFRCLCDQGFETSPSGWECVDVNECELMMAVCGDALCENVEGSFLCLCASDLEEYDAEEGHCRPRVAGAQRIPEVRTEDQAPSLIRMECYSEHNGGPPCSQILGQNSTQAECCCTQGARWGKACAPCPSEDSVEFSQLCPSGQGYIPVEGAWTFGQTMYTDADECVLFGPALCQNGRCSNIVPGYICLCNPGYHYDASSRKCQDHNECQDLACENGECVNQEGSFHCLCNPPLTLDLSGQRCVNTTSSTEDFPDHDIHMDICWKKVTNDVCSQPLRGHHTTYTECCCQDGEAWSQQCALCPPRSSEVYAQLCNVARIEAERGAGIHFRPGYEYGPGLDDLPENLYGPDGAPFYNYLGPEDTAPEPPFSNPASQPGDNTPVLEPPLQPSELQPHYLASHSEPPASFEGLQAEECGILNGCENGRCVRVREGYTCDCFEGFQLDAPTLACVDVNECEDLNGPARLCAHGHCENTEGSYRCHCSPGYVAEPGPPHCAAKE.

Positions 1–35 (MRAPTTARCSGCIQRVRWRGFLPLVLAVLMGTSHA) are cleaved as a signal peptide. Residues 94 to 115 (NPGWLAEAEARRPPRTQQLRRV) form a heparin-binding region. Positions 103 to 152 (ARRPPRTQQLRRVQPPVQTRRSHPRGQQQIAARAAPSVARLETPQRPAAA) are disordered. Residues 108–132 (RTQQLRRVQPPVQTRRSHPRGQQQI) are compositionally biased toward polar residues. The N-linked (GlcNAc...) asparagine glycan is linked to Asn-175. The EGF-like 1 domain occupies 181–213 (IKPVCQPPCQNRGSCSRPQVCICRSGFRGARCE). Intrachain disulfides connect Cys-185–Cys-195, Cys-189–Cys-201, and Cys-203–Cys-212. Residues 220–305 (EFDPQNARPV…QLMSNALPSG (86 aa)) form a disordered region. The heparin-binding stretch occupies residues 226 to 243 (ARPVPRRSVERAPGPHRS). Pro residues predominate over residues 257–266 (LVPPPSPPPS). Positions 293 to 302 (ANGQLMSNAL) are enriched in polar residues. The N-linked (GlcNAc...) asparagine glycan is linked to Asn-328. Residue 329–339 (LTEKIKKIKVV) participates in heparin binding. Residues 381–413 (RIYFCQIPCLNGGRCIGRDECWCPANSTGKFCH) form the EGF-like 2 domain. 3 disulfide bridges follow: Cys-385–Cys-395, Cys-389–Cys-401, and Cys-403–Cys-412. Residue Asn-406 is glycosylated (N-linked (GlcNAc...) asparagine). Position 491 is a phosphoserine (Ser-491). Residues 492-524 (VETRASHRPHGNLGHSPWASNSIPARAGEAPRP) are disordered. A TB 1 domain is found at 536-588 (GQCYLSTVNGQCANPLGSLTSQEDCCGSVGTFWGVTSCAPCPPRQEGPAFPVI). Disulfide bonds link Cys-538-Cys-560, Cys-547-Cys-573, and Cys-561-Cys-576. A glycan (N-linked (GlcNAc...) asparagine) is linked at Asn-603. One can recognise an EGF-like 3; calcium-binding domain in the interval 609-649 (DINECLTLGLCKDSECVNTRGSYLCTCRPGLMLDPSRSRCV). 7 disulfides stabilise this stretch: Cys-613/Cys-624, Cys-619/Cys-633, Cys-635/Cys-648, Cys-661/Cys-683, Cys-670/Cys-696, Cys-684/Cys-699, and Cys-685/Cys-711. Residues 659–711 (GLCYRSLGSGTCTLPLVHRITKQICCCSRVGKAWGSTCEQCPLPGTEAFREIC) enclose the TB 2 domain. Disordered regions lie at residues 730 to 761 (KAEEEELASPLREQTEQSTAPPPGQAERQPLR) and 787 to 819 (SAPHLPARVPGDATGRPAPSLPGQGIPESPAEE). Positions 835-877 (DFDPCFAGASNICGPGTCVSLPNGYRCVCSPGYQLHPSQDYCT) constitute an EGF-like 4 domain. Intrachain disulfides connect Cys-839/Cys-852, Cys-847/Cys-861, Cys-863/Cys-876, Cys-882/Cys-893, Cys-887/Cys-902, Cys-904/Cys-919, Cys-925/Cys-936, Cys-931/Cys-945, Cys-947/Cys-959, Cys-965/Cys-976, Cys-971/Cys-985, Cys-988/Cys-999, Cys-1005/Cys-1016, Cys-1011/Cys-1025, Cys-1027/Cys-1040, Cys-1046/Cys-1057, Cys-1052/Cys-1066, Cys-1069/Cys-1082, Cys-1088/Cys-1099, Cys-1094/Cys-1108, Cys-1111/Cys-1124, Cys-1130/Cys-1142, Cys-1137/Cys-1151, Cys-1153/Cys-1165, Cys-1171/Cys-1183, Cys-1177/Cys-1192, Cys-1194/Cys-1207, Cys-1213/Cys-1224, Cys-1219/Cys-1233, Cys-1235/Cys-1249, Cys-1255/Cys-1268, Cys-1263/Cys-1277, Cys-1281/Cys-1293, Cys-1299/Cys-1311, Cys-1305/Cys-1320, Cys-1322/Cys-1335, Cys-1341/Cys-1353, Cys-1348/Cys-1362, Cys-1364/Cys-1378, Cys-1405/Cys-1428, Cys-1415/Cys-1440, Cys-1429/Cys-1443, Cys-1430/Cys-1455, Cys-1481/Cys-1494, Cys-1489/Cys-1503, Cys-1505/Cys-1518, Cys-1524/Cys-1534, Cys-1529/Cys-1543, and Cys-1545/Cys-1558. An EGF-like 5; calcium-binding domain is found at 878-920 (DDNECMRNPCEGRGRCVNSVGSYSCLCYPGYTLVTLGDTQECQ). The EGF-like 6; calcium-binding domain occupies 921–960 (DIDECEQPGVCSGGRCSNTEGSYHCECDRGYIMVRKGHCQ). An EGF-like 7; calcium-binding domain is found at 961-1000 (DINECRHPGTCPDGRCVNSPGSYTCLACEEGYVGQSGSCV). The 41-residue stretch at 1001–1041 (DVNECLTPGICTHGRCINMEGSFRCSCEPGYEVTPDKKGCR) folds into the EGF-like 8; calcium-binding domain. The EGF-like 9; calcium-binding domain occupies 1042 to 1083 (DVDECASRASCPTGLCLNTEGSFTCSACQSGYWVNEDGTACE). Positions 1084–1125 (DLDECAFPGVCPTGVCTNTVGSFSCKDCDQGYRPNPLGNRCE) constitute an EGF-like 10; calcium-binding domain. The EGF-like 11; calcium-binding domain maps to 1126-1166 (DVDECEGPQSSCRGGECKNTEGSYQCLCHQGFQLVNGTMCE). Asn-1161 carries an N-linked (GlcNAc...) asparagine glycan. Residues 1167 to 1208 (DVNECVGEEHCAPHGECLNSLGSFFCLCAPGFASAEGGTRCQ) enclose the EGF-like 12; calcium-binding domain. Residues 1209-1250 (DVDECAATDPCPGGHCVNTEGSFSCLCETASFQPSPDSGECL) form the EGF-like 13; calcium-binding domain. Positions 1251–1294 (DIDECEDREDPVCGAWRCENSPGSYRCILDCQPGFYVAPNGDCI) constitute an EGF-like 14; calcium-binding domain. In terms of domain architecture, EGF-like 15; calcium-binding spans 1295 to 1336 (DIDECANDTVCGNHGFCDNTDGSFRCLCDQGFETSPSGWECV). Residue Asn-1301 is glycosylated (N-linked (GlcNAc...) asparagine). Positions 1337 to 1379 (DVNECELMMAVCGDALCENVEGSFLCLCASDLEEYDAEEGHCR) constitute an EGF-like 16; calcium-binding domain. The TB 3 domain maps to 1403–1455 (MECYSEHNGGPPCSQILGQNSTQAECCCTQGARWGKACAPCPSEDSVEFSQLC). N-linked (GlcNAc...) asparagine glycosylation is present at Asn-1422. The region spanning 1477 to 1519 (DADECVLFGPALCQNGRCSNIVPGYICLCNPGYHYDASSRKCQ) is the EGF-like 17; calcium-binding domain. In terms of domain architecture, EGF-like 18; calcium-binding spans 1520–1559 (DHNECQDLACENGECVNQEGSFHCLCNPPLTLDLSGQRCV). N-linked (GlcNAc...) asparagine glycosylation is present at Asn-1560. Positions 1576–1628 (DICWKKVTNDVCSQPLRGHHTTYTECCCQDGEAWSQQCALCPPRSSEVYAQLC) constitute a TB 4 domain. 4 disulfide bridges follow: Cys-1578-Cys-1601, Cys-1587-Cys-1613, Cys-1602-Cys-1616, and Cys-1603-Cys-1628. Residues 1631–1813 (ARIEAERGAG…PGPPHCAAKE (183 aa)) are C-terminal domain. The interval 1671-1717 (YLGPEDTAPEPPFSNPASQPGDNTPVLEPPLQPSELQPHYLASHSEP) is disordered. Residues 1725–1765 (QAEECGILNGCENGRCVRVREGYTCDCFEGFQLDAPTLACV) form the EGF-like 19; calcium-binding domain. 6 disulfides stabilise this stretch: Cys-1729–Cys-1740, Cys-1735–Cys-1749, Cys-1751–Cys-1764, Cys-1770–Cys-1785, Cys-1780–Cys-1794, and Cys-1796–Cys-1809. In terms of domain architecture, EGF-like 20; calcium-binding spans 1766–1810 (DVNECEDLNGPARLCAHGHCENTEGSYRCHCSPGYVAEPGPPHCA).

It belongs to the LTBP family. In terms of assembly, forms part of the large latent transforming growth factor beta precursor complex; removal is essential for activation of complex. Interacts with SDC4. Interacts (via C-terminal domain) with FBN1 (via N-terminal domain) in a Ca(+2)-dependent manner. N-Glycosylated. In terms of processing, contains hydroxylated asparagine residues. Expressed in the anterior chamber of the eye.

Its subcellular location is the secreted. The protein localises to the extracellular space. It is found in the extracellular matrix. In terms of biological role, may play an integral structural role in elastic-fiber architectural organization and/or assembly. The sequence is that of Latent-transforming growth factor beta-binding protein 2 (Ltbp2) from Mus musculus (Mouse).